The sequence spans 571 residues: Glycine--tRNA ligase (571 aa).

Residues arginine 99 and glutamate 165 each coordinate substrate. Residues 197–199 (RNE), 207–212 (IRLREF), 324–325 (EC), and 443–446 (GIDR) each bind ATP. 212–216 (FTQAE) contributes to the substrate binding site. 439–443 (EPSFG) is a binding site for substrate.

Belongs to the class-II aminoacyl-tRNA synthetase family.

The protein localises to the cytoplasm. The enzyme catalyses tRNA(Gly) + glycine + ATP = glycyl-tRNA(Gly) + AMP + diphosphate. Catalyzes the attachment of glycine to tRNA(Gly). In Pyrococcus abyssi (strain GE5 / Orsay), this protein is Glycine--tRNA ligase.